The following is a 91-amino-acid chain: Small ribosomal subunit protein uS19 (91 aa).

Belongs to the universal ribosomal protein uS19 family.

Functionally, protein S19 forms a complex with S13 that binds strongly to the 16S ribosomal RNA. In Prochlorococcus marinus (strain NATL1A), this protein is Small ribosomal subunit protein uS19.